Consider the following 271-residue polypeptide: Tryptophan synthase alpha chain (271 aa).

Active-site proton acceptor residues include E49 and D60.

Belongs to the TrpA family. In terms of assembly, tetramer of two alpha and two beta chains.

It carries out the reaction (1S,2R)-1-C-(indol-3-yl)glycerol 3-phosphate + L-serine = D-glyceraldehyde 3-phosphate + L-tryptophan + H2O. The protein operates within amino-acid biosynthesis; L-tryptophan biosynthesis; L-tryptophan from chorismate: step 5/5. In terms of biological role, the alpha subunit is responsible for the aldol cleavage of indoleglycerol phosphate to indole and glyceraldehyde 3-phosphate. This Burkholderia pseudomallei (strain 1106a) protein is Tryptophan synthase alpha chain.